We begin with the raw amino-acid sequence, 92 residues long: Signal recognition particle 19 kDa protein (92 aa).

The protein belongs to the SRP19 family. As to quaternary structure, part of the signal recognition particle protein translocation system, which is composed of SRP and FtsY. Archaeal SRP consists of a 7S RNA molecule of 300 nucleotides and two protein subunits: SRP54 and SRP19.

It is found in the cytoplasm. Its function is as follows. Involved in targeting and insertion of nascent membrane proteins into the cytoplasmic membrane. Binds directly to 7S RNA and mediates binding of the 54 kDa subunit of the SRP. In Halobacterium salinarum (strain ATCC 29341 / DSM 671 / R1), this protein is Signal recognition particle 19 kDa protein.